The following is a 428-amino-acid chain: Glutamate-1-semialdehyde 2,1-aminomutase (428 aa).

Lysine 265 bears the N6-(pyridoxal phosphate)lysine mark.

It belongs to the class-III pyridoxal-phosphate-dependent aminotransferase family. HemL subfamily. As to quaternary structure, homodimer. It depends on pyridoxal 5'-phosphate as a cofactor.

It localises to the cytoplasm. The enzyme catalyses (S)-4-amino-5-oxopentanoate = 5-aminolevulinate. It participates in porphyrin-containing compound metabolism; protoporphyrin-IX biosynthesis; 5-aminolevulinate from L-glutamyl-tRNA(Glu): step 2/2. This is Glutamate-1-semialdehyde 2,1-aminomutase from Aeromonas hydrophila subsp. hydrophila (strain ATCC 7966 / DSM 30187 / BCRC 13018 / CCUG 14551 / JCM 1027 / KCTC 2358 / NCIMB 9240 / NCTC 8049).